Here is a 703-residue protein sequence, read N- to C-terminus: Cyclomaltodextrin glucanotransferase (703 aa).

Residues 1–29 form the signal peptide; sequence MNDLNDFLKTILLSFIFFLLLSLPTVAEA. The A1 stretch occupies residues 30–160; sequence DVTNKVNYSK…GIKVIMDFTP (131 aa). Asp52, Asn54, Asn57, and Asn58 together coordinate Ca(2+). Cys68 and Cys75 are oxidised to a cystine. Ca(2+) contacts are provided by Gly76 and Asp78. Substrate is bound at residue 122–123; the sequence is YW. Residue Asn161 participates in Ca(2+) binding. The segment at 161–224 is b; that stretch reads NHSSPALETN…NLYDLADYDL (64 aa). His162 is a binding site for substrate. Residue Ile212 coordinates Ca(2+). 215–218 is a binding site for substrate; that stretch reads NLYD. Asp221 provides a ligand contact to Ca(2+). The segment at 225–428 is A2; that stretch reads NNTVMDQYLK…LRQTNSALGY (204 aa). Position 249 (Arg249) interacts with substrate. Residue Asp251 is the Nucleophile of the active site. 254 to 255 lines the substrate pocket; that stretch reads KH. His255 is a binding site for Ca(2+). Glu279 functions as the Proton donor in the catalytic mechanism. Residues His349, Asp393, and Arg397 each coordinate substrate. The c stretch occupies residues 429–516; it reads GTTTERWLNE…SVAVWQVSNP (88 aa). The segment at 517–600 is d; sequence STSPLIGQVG…SPTYKEFEVL (84 aa). Residues 520 to 598 form the IPT/TIG domain; it reads PLIGQVGPMM…IKSPTYKEFE (79 aa). One can recognise a CBM20 domain in the interval 599–703; it reads VLSGNQVSVR…TGTDTVMINW (105 aa). The tract at residues 601 to 703 is e; it reads SGNQVSVRFG…TGTDTVMINW (103 aa).

The protein belongs to the glycosyl hydrolase 13 family. As to quaternary structure, monomer. Requires Ca(2+) as cofactor.

The protein resides in the secreted. It carries out the reaction Cyclizes part of a (1-&gt;4)-alpha-D-glucan chain by formation of a (1-&gt;4)-alpha-D-glucosidic bond.. This is Cyclomaltodextrin glucanotransferase (cgt) from Bacillus sp. (strain 1-1).